Consider the following 438-residue polypeptide: Asparagine--tRNA ligase (438 aa).

This sequence belongs to the class-II aminoacyl-tRNA synthetase family. In terms of assembly, homodimer.

It localises to the cytoplasm. The catalysed reaction is tRNA(Asn) + L-asparagine + ATP = L-asparaginyl-tRNA(Asn) + AMP + diphosphate + H(+). In Thermus thermophilus (strain ATCC 27634 / DSM 579 / HB8), this protein is Asparagine--tRNA ligase.